Here is a 217-residue protein sequence, read N- to C-terminus: Probable GTP-binding protein EngB (217 aa).

In terms of domain architecture, EngB-type G spans 27–201 (GGVEIAFAGR…AQTLSGWYLA (175 aa)). Residues 35 to 42 (GRSNAGKS), 62 to 66 (GRTQL), 80 to 83 (DLPG), 147 to 150 (TKAD), and 180 to 182 (FSS) contribute to the GTP site. Mg(2+)-binding residues include Ser42 and Thr64.

Belongs to the TRAFAC class TrmE-Era-EngA-EngB-Septin-like GTPase superfamily. EngB GTPase family. Mg(2+) is required as a cofactor.

Necessary for normal cell division and for the maintenance of normal septation. In Aeromonas salmonicida (strain A449), this protein is Probable GTP-binding protein EngB.